The chain runs to 325 residues: MSEQAQAKRKVQIGDKLRGADKVRTIPMVNEETGYQRKPDWIRVRVPANGEIQRIKSLLRKQKLHTVCEEAACPNLPECFGGGTATFMIMGDICTRRCAFCDVGFGRPNALDAQEPLHLAESVENLGLNYVVITSVDRDDLADGGAEHFAECIRQVRALTPETRIEILTPDFRPCLDTAVEILAETAPDVFNHNIETVPELYKHIRPGARYQHSLDLLKRYKALRPDVSTKSGIMVGLGETFEQVINTIKDLRTHDVDMITIGQYLQPSKHHAPVDRFVHPDEFREYARVANELGFTSVASGPMVRSSYHADLQHKGVDVGLYKP.

The [4Fe-4S] cluster site is built by cysteine 68, cysteine 73, cysteine 79, cysteine 94, cysteine 98, cysteine 101, and serine 308. A Radical SAM core domain is found at 80 to 297 (FGGGTATFMI…ARVANELGFT (218 aa)).

The protein belongs to the radical SAM superfamily. Lipoyl synthase family. The cofactor is [4Fe-4S] cluster.

It localises to the cytoplasm. The catalysed reaction is [[Fe-S] cluster scaffold protein carrying a second [4Fe-4S](2+) cluster] + N(6)-octanoyl-L-lysyl-[protein] + 2 oxidized [2Fe-2S]-[ferredoxin] + 2 S-adenosyl-L-methionine + 4 H(+) = [[Fe-S] cluster scaffold protein] + N(6)-[(R)-dihydrolipoyl]-L-lysyl-[protein] + 4 Fe(3+) + 2 hydrogen sulfide + 2 5'-deoxyadenosine + 2 L-methionine + 2 reduced [2Fe-2S]-[ferredoxin]. It functions in the pathway protein modification; protein lipoylation via endogenous pathway; protein N(6)-(lipoyl)lysine from octanoyl-[acyl-carrier-protein]: step 2/2. Catalyzes the radical-mediated insertion of two sulfur atoms into the C-6 and C-8 positions of the octanoyl moiety bound to the lipoyl domains of lipoate-dependent enzymes, thereby converting the octanoylated domains into lipoylated derivatives. In Alcanivorax borkumensis (strain ATCC 700651 / DSM 11573 / NCIMB 13689 / SK2), this protein is Lipoyl synthase.